A 124-amino-acid polypeptide reads, in one-letter code: MKNKYLTLVALSGFFCVALGAFAAHGLSHILEAKALSWIDTGLEYQMFHTIAVLAVALSALRDNKFARLSMSSWLIGILLFSGSLYALAFEASNVIVWITPIGGTLFLIGWISLAYGSFKSKSL.

Helical transmembrane passes span leucine 6–glycine 26, serine 70–phenylalanine 90, and valine 95–alanine 115.

The protein belongs to the UPF0382 family.

It localises to the cell membrane. This is UPF0382 membrane protein HI_1073 from Haemophilus influenzae (strain ATCC 51907 / DSM 11121 / KW20 / Rd).